The sequence spans 122 residues: Holo-[acyl-carrier-protein] synthase (122 aa).

Positions 5 and 54 each coordinate Mg(2+).

It belongs to the P-Pant transferase superfamily. AcpS family. Requires Mg(2+) as cofactor.

Its subcellular location is the cytoplasm. The catalysed reaction is apo-[ACP] + CoA = holo-[ACP] + adenosine 3',5'-bisphosphate + H(+). In terms of biological role, transfers the 4'-phosphopantetheine moiety from coenzyme A to a Ser of acyl-carrier-protein. The polypeptide is Holo-[acyl-carrier-protein] synthase (Aquifex aeolicus (strain VF5)).